We begin with the raw amino-acid sequence, 372 residues long: 4-hydroxy-3-methylbut-2-en-1-yl diphosphate synthase (flavodoxin) (372 aa).

Residues Cys270, Cys273, Cys305, and Glu312 each contribute to the [4Fe-4S] cluster site.

The protein belongs to the IspG family. [4Fe-4S] cluster serves as cofactor.

It carries out the reaction (2E)-4-hydroxy-3-methylbut-2-enyl diphosphate + oxidized [flavodoxin] + H2O + 2 H(+) = 2-C-methyl-D-erythritol 2,4-cyclic diphosphate + reduced [flavodoxin]. It participates in isoprenoid biosynthesis; isopentenyl diphosphate biosynthesis via DXP pathway; isopentenyl diphosphate from 1-deoxy-D-xylulose 5-phosphate: step 5/6. Converts 2C-methyl-D-erythritol 2,4-cyclodiphosphate (ME-2,4cPP) into 1-hydroxy-2-methyl-2-(E)-butenyl 4-diphosphate. This chain is 4-hydroxy-3-methylbut-2-en-1-yl diphosphate synthase (flavodoxin), found in Marinobacter nauticus (strain ATCC 700491 / DSM 11845 / VT8) (Marinobacter aquaeolei).